We begin with the raw amino-acid sequence, 218 residues long: Large ribosomal subunit protein uL1 (218 aa).

This sequence belongs to the universal ribosomal protein uL1 family. In terms of assembly, part of the 50S ribosomal subunit.

Functionally, probably involved in E site tRNA release. Binds directly to 23S rRNA. Its function is as follows. Protein L1 is also a translational repressor protein, it controls the translation of its operon by binding to its mRNA. This Saccharolobus solfataricus (strain ATCC 35092 / DSM 1617 / JCM 11322 / P2) (Sulfolobus solfataricus) protein is Large ribosomal subunit protein uL1.